We begin with the raw amino-acid sequence, 183 residues long: MNTEAAGKRVHVIQGEFKVVNDPHIVLSTILGSCVAACLRDPVTGVGGMNHFLLPGSASSPSSGADATRYGVHLMELLINGLLKQGARRDRLEAKIFGGARTIARFSNVGEQNAAFARRFLMDEGIRIVGESTGGDHGRKLEYWPSSGRARQYALTGVEAQRAMQMDQRPAAPKPVESSIEFF.

Belongs to the CheD family.

It catalyses the reaction L-glutaminyl-[protein] + H2O = L-glutamyl-[protein] + NH4(+). In terms of biological role, probably deamidates glutamine residues to glutamate on methyl-accepting chemotaxis receptors (MCPs), playing an important role in chemotaxis. This chain is Probable chemoreceptor glutamine deamidase CheD, found in Sinorhizobium medicae (strain WSM419) (Ensifer medicae).